A 124-amino-acid polypeptide reads, in one-letter code: Small ribosomal subunit protein bS6 (124 aa).

Residues 97–124 (EQGPSAMMRRGDRDRSNRSDRRRDRDAA) form a disordered region. Positions 105–124 (RRGDRDRSNRSDRRRDRDAA) are enriched in basic and acidic residues.

It belongs to the bacterial ribosomal protein bS6 family.

In terms of biological role, binds together with bS18 to 16S ribosomal RNA. The protein is Small ribosomal subunit protein bS6 of Zymomonas mobilis subsp. mobilis (strain ATCC 31821 / ZM4 / CP4).